The following is a 470-amino-acid chain: MMTAKAVDKIPVTLSGFMHQLPDSLYPVEDLAASSVTIFPNGELGGPFDQMNGVAGDGMINIDMTGEKRPLDLPYPSSFAPISAPRNQTFTYMGKFSIDPQYPGASCYPEGIINIVSAGILQGVTPPASTTASSSVTSASPNPLATGPLGVCTMSQTQPELDHLYSPPPPPPPYSGCTGDLYQDPSAFLSPPSTTSTSSLAYQPPPSYPSPKPAMDPGLIPMIPDYPGFFPSPCQRDPHGAAGPDRKPFPCPLDSLRVPPPLTPLSTIRNFTLGGPGAGVTGPGASGGGEGPRLPGSGSAAVTATPYNPHHLPLRPILRPRKYPNRPSKTPVHERPYPCPAEGCDRRFSRSDELTRHIRIHTGHKPFQCRICMRNFSRSDHLTTHIRTHTGEKPFACDYCGRKFARSDERKRHTKIHLRQKERKSSAPSAPPSAQSSASGPGGSQAGGSLCGNSAIGGPLASCTSRTRTP.

The segment covering 126–141 (PPASTTASSSVTSASP) has biased composition (low complexity). Disordered stretches follow at residues 126–153 (PPASTTASSSVTSASPNPLATGPLGVCT), 159–178 (PELDHLYSPPPPPPPYSGCT), and 185–210 (PSAFLSPPSTTSTSSLAYQPPPSYPS). Over residues 190-202 (SPPSTTSTSSLAY) the composition is skewed to low complexity. Residue Lys247 is modified to N6-acetyllysine; by EP300. Residues 275-291 (GPGAGVTGPGASGGGEG) are compositionally biased toward gly residues. Positions 275 to 345 (GPGAGVTGPG…PYPCPAEGCD (71 aa)) are disordered. C2H2-type zinc fingers lie at residues 337–361 (YPCPAEGCDRRFSRSDELTRHIRIH), 367–389 (FQCRICMRNFSRSDHLTTHIRTH), and 395–417 (FACDYCGRKFARSDERKRHTKIH). The tract at residues 408-470 (DERKRHTKIH…ASCTSRTRTP (63 aa)) is disordered. Basic residues predominate over residues 412–422 (RHTKIHLRQKE). A compositionally biased stretch (low complexity) spans 426–439 (SAPSAPPSAQSSAS). Over residues 440-450 (GPGGSQAGGSL) the composition is skewed to gly residues.

It belongs to the EGR C2H2-type zinc-finger protein family. In terms of assembly, interacts with HCFC1. Interacts with WWP2. Interacts with UBC9. Interacts with CITED1. Interacts (via phosphorylated form) with SFN. Post-translationally, ubiquitinated by WWP2 leading to proteasomal degradation. Acetylated at Lys-247. May be deacetylated by HDAC6, HDAC10 or SIRT1. Expressed mainly in the thymus.

It localises to the nucleus. It functions in the pathway protein modification; protein sumoylation. Its function is as follows. Sequence-specific DNA-binding transcription factor. Plays a role in hindbrain segmentation by regulating the expression of a subset of homeobox containing genes and in Schwann cell myelination by regulating the expression of genes involved in the formation and maintenance of myelin. Binds to two EGR2-consensus sites EGR2A (5'-CTGTAGGAG-3') and EGR2B (5'-ATGTAGGTG-3') in the HOXB3 enhancer and promotes HOXB3 transcriptional activation. Binds to specific DNA sites located in the promoter region of HOXA4, HOXB2 and ERBB2. Regulates hindbrain segmentation by controlling the expression of Hox genes, such as HOXA4, HOXB3 and HOXB2, and thereby specifying odd and even rhombomeres. Promotes the expression of HOXB3 in the rhombomere r5 and of HOXB3 in r3 and r5 in the hindbrain. Regulates myelination in the peripheral nervous system after birth, possibly by regulating the expression of myelin proteins, such as MPZ, and by promoting the differentiation of Schwann cells. Involved in the development of the jaw openener musculature, probably by playing a role in its innervation through trigeminal motor neurons. May play a role in adipogenesis, possibly by regulating the expression of CEBPB. In terms of biological role, E3 SUMO-protein ligase helping SUMO1 conjugation to its coregulators NAB1 and NAB2, whose sumoylation down-regulates EGR2 transcriptional activity. In Mus musculus (Mouse), this protein is E3 SUMO-protein ligase EGR2 (Egr2).